The following is a 545-amino-acid chain: 4-coumarate--CoA ligase 2 (545 aa).

The ATP site is built by Ser-192, Ser-193, Gly-194, Thr-195, Thr-196, and Lys-200. Residues Tyr-242 and Ser-246 each coordinate (E)-4-coumaroyl-AMP. Lys-263 is a CoA binding site. The tract at residues 265–334 (DIAQFLELIP…AKFPNAKLGQ (70 aa)) is SBD1. Residues Ala-312, Gln-334, Gly-335, Thr-339, and Met-347 each contribute to the (E)-4-coumaroyl-AMP site. Positions 334, 335, and 339 each coordinate ATP. The segment at 335–402 (GYGMTEAGPV…IRGDQIMKGY (68 aa)) is SBD2. Asp-423 and Arg-438 together coordinate ATP. (E)-4-coumaroyl-AMP is bound by residues Lys-440 and Lys-444. 2 residues coordinate CoA: Lys-446 and Gly-447. Lys-529 provides a ligand contact to ATP.

It belongs to the ATP-dependent AMP-binding enzyme family. Requires Mg(2+) as cofactor.

The enzyme catalyses (E)-4-coumarate + ATP + CoA = (E)-4-coumaroyl-CoA + AMP + diphosphate. It catalyses the reaction (E)-4-coumarate + ATP + H(+) = (E)-4-coumaroyl-AMP + diphosphate. The catalysed reaction is (E)-4-coumaroyl-AMP + CoA = (E)-4-coumaroyl-CoA + AMP + H(+). The protein operates within phytoalexin biosynthesis; 3,4',5-trihydroxystilbene biosynthesis; 3,4',5-trihydroxystilbene from trans-4-coumarate: step 1/2. Functionally, carboxylate--CoA ligase that may use 4-coumarate as substrate. Follows a two-step reaction mechanism, wherein the carboxylate substrate first undergoes adenylation by ATP, followed by a thioesterification in the presence of CoA to yield the final CoA thioester. The chain is 4-coumarate--CoA ligase 2 (4CL2) from Solanum tuberosum (Potato).